Reading from the N-terminus, the 283-residue chain is 4-diphosphocytidyl-2-C-methyl-D-erythritol kinase (283 aa).

The active site involves K10. 99–109 (PMGGGLGGGSS) is an ATP binding site. The active site involves D141.

Belongs to the GHMP kinase family. IspE subfamily. As to quaternary structure, homodimer.

It carries out the reaction 4-CDP-2-C-methyl-D-erythritol + ATP = 4-CDP-2-C-methyl-D-erythritol 2-phosphate + ADP + H(+). It functions in the pathway isoprenoid biosynthesis; isopentenyl diphosphate biosynthesis via DXP pathway; isopentenyl diphosphate from 1-deoxy-D-xylulose 5-phosphate: step 3/6. Its function is as follows. Catalyzes the phosphorylation of the position 2 hydroxy group of 4-diphosphocytidyl-2C-methyl-D-erythritol. This Salmonella enteritidis PT4 (strain P125109) protein is 4-diphosphocytidyl-2-C-methyl-D-erythritol kinase.